Consider the following 842-residue polypeptide: Protein P (842 aa).

The segment at 1-177 (MPLSYQHFRR…FCGSPYSWEQ (177 aa)) is terminal protein domain (TP). Positions 178–345 (ELHHGAFLDG…YCLTHLVNLL (168 aa)) are spacer. Residues 186–273 (DGPSRMGEES…AKNIASRSAS (88 aa)) are disordered. A compositionally biased stretch (polar residues) spans 223-239 (GPQSQQRPLDGSQQGRS). Residues 346 to 689 (EDWGPCTEHG…YLNLYPVARQ (344 aa)) are polymerase/reverse transcriptase domain (RT). The Reverse transcriptase domain maps to 356 to 599 (RHHIRIPRTP…YSLNFMGYVI (244 aa)). Residues aspartate 428, aspartate 550, and aspartate 551 each contribute to the Mg(2+) site.

The protein belongs to the hepadnaviridae P protein family.

It carries out the reaction DNA(n) + a 2'-deoxyribonucleoside 5'-triphosphate = DNA(n+1) + diphosphate. It catalyses the reaction Endonucleolytic cleavage to 5'-phosphomonoester.. With respect to regulation, activated by host HSP70 and HSP40 in vitro to be able to bind the epsilon loop of the pgRNA. Because deletion of the RNase H region renders the protein partly chaperone-independent, the chaperones may be needed indirectly to relieve occlusion of the RNA-binding site by this domain. Inhibited by several reverse-transcriptase inhibitors: Lamivudine, Adefovir and Entecavir. Multifunctional enzyme that converts the viral RNA genome into dsDNA in viral cytoplasmic capsids. This enzyme displays a DNA polymerase activity that can copy either DNA or RNA templates, and a ribonuclease H (RNase H) activity that cleaves the RNA strand of RNA-DNA heteroduplexes in a partially processive 3'- to 5'-endonucleasic mode. Neo-synthesized pregenomic RNA (pgRNA) are encapsidated together with the P protein, and reverse-transcribed inside the nucleocapsid. Initiation of reverse-transcription occurs first by binding the epsilon loop on the pgRNA genome, and is initiated by protein priming, thereby the 5'-end of (-)DNA is covalently linked to P protein. Partial (+)DNA is synthesized from the (-)DNA template and generates the relaxed circular DNA (RC-DNA) genome. After budding and infection, the RC-DNA migrates in the nucleus, and is converted into a plasmid-like covalently closed circular DNA (cccDNA). The activity of P protein does not seem to be necessary for cccDNA generation, and is presumably released from (+)DNA by host nuclear DNA repair machinery. The chain is Protein P from Homo sapiens (Human).